A 371-amino-acid chain; its full sequence is Macronuclear solute carrier homolog CR-MSC (371 aa).

Solcar repeat units lie at residues 16–111 (RMNY…FYDK), 120–208 (ARPD…CKEN), and 215–304 (PHWI…LSQF). Helical transmembrane passes span 22-42 (FAAA…LDMV), 89-109 (TFFF…GYFY), 126-146 (VAAG…IDIV), 184-204 (AGAN…IYDW), 221-241 (LWGT…FDMI), and 281-301 (FGSF…ICYL).

Belongs to the mitochondrial carrier (TC 2.A.29) family.

The protein resides in the membrane. This chain is Macronuclear solute carrier homolog CR-MSC, found in Oxytricha fallax.